A 383-amino-acid polypeptide reads, in one-letter code: MSASHEQNSAAAPNGPNLSEALISLGNLRHNLACIRAITGPQCRVMGIVKANAYGHGATQVTATLEAEGVRDFGVANIYEAIELLQEHRMLPDSRILAFASPLAGHIDLYLQHGVEMTVCDHETARAAESIAAACGRRLQVQLKVDTGMGRLGVTPEEAAELLELIEACPNLELTGIYTHFAESDKPEGFTARQLERFLHVTGAYERRTGKTVTKHAANSGAIISMPDARLDMVRPGILLYGCHPVDAAPSTVPVRPVMQFQSRVIFVKEVPAGTAISYNRTWSAPKATRIATISAGYADGFHRALSNQARVSIGGKSFPQVGTITMDQTMVNLGSDDSVKVGDTAVLFGWDGPSAGEQALAAGTISYELLCSVSRRVRRIVV.

Residue lysine 50 is the Proton acceptor; specific for D-alanine of the active site. Lysine 50 carries the post-translational modification N6-(pyridoxal phosphate)lysine. Arginine 151 contributes to the substrate binding site. Catalysis depends on tyrosine 279, which acts as the Proton acceptor; specific for L-alanine. Methionine 327 contributes to the substrate binding site.

The protein belongs to the alanine racemase family. Pyridoxal 5'-phosphate serves as cofactor.

The catalysed reaction is L-alanine = D-alanine. It participates in amino-acid biosynthesis; D-alanine biosynthesis; D-alanine from L-alanine: step 1/1. Its function is as follows. Catalyzes the interconversion of L-alanine and D-alanine. May also act on other amino acids. The sequence is that of Alanine racemase (alr) from Chlorobaculum tepidum (strain ATCC 49652 / DSM 12025 / NBRC 103806 / TLS) (Chlorobium tepidum).